Reading from the N-terminus, the 140-residue chain is Phosphoribosyl-AMP cyclohydrolase (140 aa).

A Mg(2+)-binding site is contributed by D85. Residue C86 coordinates Zn(2+). Residues D87 and D89 each contribute to the Mg(2+) site. The Zn(2+) site is built by C102 and C109.

It belongs to the PRA-CH family. As to quaternary structure, homodimer. The cofactor is Mg(2+). Zn(2+) is required as a cofactor.

The protein localises to the cytoplasm. The enzyme catalyses 1-(5-phospho-beta-D-ribosyl)-5'-AMP + H2O = 1-(5-phospho-beta-D-ribosyl)-5-[(5-phospho-beta-D-ribosylamino)methylideneamino]imidazole-4-carboxamide. The protein operates within amino-acid biosynthesis; L-histidine biosynthesis; L-histidine from 5-phospho-alpha-D-ribose 1-diphosphate: step 3/9. Its function is as follows. Catalyzes the hydrolysis of the adenine ring of phosphoribosyl-AMP. The protein is Phosphoribosyl-AMP cyclohydrolase of Bradyrhizobium diazoefficiens (strain JCM 10833 / BCRC 13528 / IAM 13628 / NBRC 14792 / USDA 110).